Consider the following 353-residue polypeptide: S-adenosylmethionine:tRNA ribosyltransferase-isomerase (353 aa).

Belongs to the QueA family. As to quaternary structure, monomer.

The protein localises to the cytoplasm. It carries out the reaction 7-aminomethyl-7-carbaguanosine(34) in tRNA + S-adenosyl-L-methionine = epoxyqueuosine(34) in tRNA + adenine + L-methionine + 2 H(+). It participates in tRNA modification; tRNA-queuosine biosynthesis. In terms of biological role, transfers and isomerizes the ribose moiety from AdoMet to the 7-aminomethyl group of 7-deazaguanine (preQ1-tRNA) to give epoxyqueuosine (oQ-tRNA). This is S-adenosylmethionine:tRNA ribosyltransferase-isomerase from Rickettsia bellii (strain RML369-C).